The primary structure comprises 87 residues: MSERNDRKVYVGRVVSDKMDKTITVLVETYKTHKLYGKRVKYSKKYKTHDENNSAKLGDIVKIQETRPLSATKRFRLVEIVEESVII.

It belongs to the universal ribosomal protein uS17 family. In terms of assembly, part of the 30S ribosomal subunit.

One of the primary rRNA binding proteins, it binds specifically to the 5'-end of 16S ribosomal RNA. This chain is Small ribosomal subunit protein uS17, found in Staphylococcus carnosus (strain TM300).